We begin with the raw amino-acid sequence, 203 residues long: MSAFKKSGSKSETSKKLVVVGDGGCGKTCLLIVFSSGTFPERYVPTVFENYITDITYGPNSKVIELALWDTAGQEEYDRLRPLSYPNSNVILLCFSIDCPASLNNVTEKWYPEVQHFCPRTPIVLVGLKADLRKDRNATEVLRTQGLTPVTYQQAQSVALSMNAPYVECSAKENTGVNEVFQLAVGLTIKKSFSFSKKSCVIL.

21–28 (GDGGCGKT) contributes to the GTP binding site. An Effector region motif is present at residues 43 to 51 (YVPTVFENY). 70 to 74 (DTAGQ) contributes to the GTP binding site. C200 is modified (cysteine methyl ester). C200 is lipidated: S-geranylgeranyl cysteine. Positions 201-203 (VIL) are cleaved as a propeptide — removed in mature form.

This sequence belongs to the small GTPase superfamily. Rho family.

It localises to the membrane. In terms of biological role, required for cell separation. Involved in the regulation of the septum degradation during cytokinesis and in the organization of F-actin patches and cytoplasmic microtubules. This Schizosaccharomyces pombe (strain 972 / ATCC 24843) (Fission yeast) protein is GTP-binding protein rho4 (rho4).